Consider the following 330-residue polypeptide: MAAVDSFYLLYREIARSCNCYMEALALVGAWYTARKSITVICDFYSLIRLHFIPRLGSRADLIKQYGRWAVVSGATDGIGRAYAEELASRGLNIILISRNEEKLQVVAKDIADTYKVETGIIVADFSSGREIYLPIREALKDKDIGILVNNVGVFYPYPQYFTQLSEDKLWDIINVNIAAASLMVHVVLPGMVERKKGAIVTISSGSCCKPTPQLAAFSASKAYLDHFSRALQYEYASKGIFVQSLIPFYVATSMTAPSSFLHRCSWLVPSPKVYAHHAVSTLGISKRTTGYWSHSIQFLFAQYMPEWLWVWGANILNRSLRKEALSCTA.

An N-acetylalanine modification is found at Ala2. A required for mitochondria translocation region spans residues Ala2 to Ala82. NADP(+) contacts are provided by residues Gly74–Gly80, Asp125, and Lys222.

Belongs to the short-chain dehydrogenases/reductases (SDR) family. 17-beta-HSD 3 subfamily. As to quaternary structure, interacts with STYXL1.

It is found in the mitochondrion. In Pongo abelii (Sumatran orangutan), this protein is Inactive hydroxysteroid dehydrogenase-like protein 1 (HSDL1).